A 71-amino-acid polypeptide reads, in one-letter code: Protein MMP24OS (71 aa).

The span at Met1–Gly10 shows a compositional bias: gly residues. Positions Met1 to Val61 are disordered. Over residues His36–Trp55 the composition is skewed to pro residues.

The polypeptide is Protein MMP24OS (Homo sapiens (Human)).